The following is a 138-amino-acid chain: MPPKKANAAGPKKGQKTRKREKKNIPYGAAHIKSTFNNTIVTITDQQGNVIAWASSGHVGFKGSRKSTPFAAQLAAENAARKAQEHGVRKVDVFVMGPGSGRETAIRSLQAAGLEVGAISDVTPQPHNGCRPPKRRRV.

A compositionally biased stretch (low complexity) spans 1-12 (MPPKKANAAGPK). Residues 1–23 (MPPKKANAAGPKKGQKTRKREKK) form a disordered region. Residues 13 to 22 (KGQKTRKREK) are compositionally biased toward basic residues.

It belongs to the universal ribosomal protein uS11 family. Part of the 30S ribosomal subunit. Interacts with proteins S7 and S18. Binds to IF-3.

Functionally, located on the platform of the 30S subunit, it bridges several disparate RNA helices of the 16S rRNA. Forms part of the Shine-Dalgarno cleft in the 70S ribosome. The polypeptide is Small ribosomal subunit protein uS11 (Mycobacterium leprae (strain Br4923)).